The following is a 2601-amino-acid chain: Centrosomal protein of 295 kDa (2601 aa).

The interval 1 to 560 (MKRKVVNTHK…KKTQPTGVGI (560 aa)) is necessary for centriole targeting and microtubule association. At Ser14 the chain carries Phosphoserine. Coiled coils occupy residues 207–273 (KRPD…EDLA) and 500–552 (AARI…KRKK). Phosphoserine is present on residues Ser654 and Ser938. The tract at residues 1008-1029 (PSADTKSGKIQEQHSSKSEKGL) is disordered. A compositionally biased stretch (basic and acidic residues) spans 1013–1027 (KSGKIQEQHSSKSEK). Coiled-coil stretches lie at residues 1053 to 1082 (LHDS…VELL) and 1498 to 1544 (IQSH…VSSE). The interval 1558-1580 (ADSERTQKSFPTKSNDTLPSSHR) is disordered. Residues 1565-1577 (KSFPTKSNDTLPS) show a composition bias toward polar residues. The residue at position 1637 (Ser1637) is a Phosphoserine. Residues 1728-1758 (QEKLLVQRQTALQQQIQKHEETLKDFFKDSQ) are a coiled coil. 3 stretches are compositionally biased toward basic and acidic residues: residues 1795–1827 (RHAD…DLGR), 1985–2003 (FSEH…KEEE), and 2100–2112 (DNRD…DSSS). 3 disordered regions span residues 1795–1834 (RHAD…KPPV), 1979–2004 (LTDP…EEET), and 2085–2117 (HPDF…SHCA). Thr2473 is subject to Phosphothreonine. Residues 2478–2601 (SLQEAFIKRK…LEKLRAKNTC (124 aa)) form an ALMS motif region. Residues 2556–2581 (RLYNQLAEVKQQKEEKTKQEAYAQNR) adopt a coiled-coil conformation.

As to quaternary structure, interacts (via ALMS motif) with microtubules; this interaction is direct.

It localises to the cytoplasm. The protein resides in the cytoskeleton. Its subcellular location is the microtubule organizing center. It is found in the centrosome. The protein localises to the centriole. It localises to the spindle. Functionally, centriole-enriched microtubule-binding protein involved in centriole biogenesis. Essential for the generation of the distal portion of new-born centrioles in a CPAP- and CEP120-mediated elongation dependent manner during the cell cycle S/G2 phase after formation of the initiating cartwheel structure. Required for the recruitment of centriolar proteins, such as POC1B, POC5 and CEP135, into the distal portion of centrioles. Also required for centriole-to-centrosome conversion during mitotic progression, but is dispensable for cartwheel removal or centriole disengagement. Binds to and stabilizes centriolar microtubule. May be involved in ciliogenesis. The chain is Centrosomal protein of 295 kDa from Homo sapiens (Human).